A 2485-amino-acid polypeptide reads, in one-letter code: Tyrosine-protein phosphatase non-receptor type 13 (2485 aa).

The KIND domain occupies 3–190 (VSLAEALEVR…SGTDQLSCNS (188 aa)). Positions 186–220 (LSCNSEQKPDRSQAIRDRLRGKGLPTGRSSTSDVL) are disordered. The segment covering 192 to 205 (QKPDRSQAIRDRLR) has biased composition (basic and acidic residues). Serine 240 is modified (phosphoserine). Residues 260-283 (SDNSGREDSENTFSPYQFKTSGPE) form a disordered region. A compositionally biased stretch (polar residues) spans 270–279 (NTFSPYQFKT). Serine 301 and serine 302 each carry phosphoserine. The tract at residues 433–467 (RSEASKRFESSSGLPGVDETLSQGQSQRPSRQYET) is disordered. Polar residues predominate over residues 452–465 (TLSQGQSQRPSRQY). A coiled-coil region spans residues 469-504 (FEGNLINQEIMLKRQEEELMQLQAKMALRQSRLSLY). The FERM domain occupies 572-872 (RKVNIMLLNG…YQHKFQLQMR (301 aa)). Serine 890, serine 897, serine 908, serine 911, and serine 914 each carry phosphoserine. Disordered regions lie at residues 947–975 (QNSS…DLSQ) and 995–1049 (TVAE…IEDP). A compositionally biased stretch (basic and acidic residues) spans 950–971 (SKEKNDKASWEEKPREMSKSYH). A compositionally biased stretch (polar residues) spans 1020-1032 (KLNNSKSVASLNR). Residues serine 1029, serine 1033, and serine 1085 each carry the phosphoserine modification. Over residues 1033 to 1042 (SPERRKHESD) the composition is skewed to basic and acidic residues. Residues 1093-1178 (LVNLKKDAKY…EDVTLVISQP (86 aa)) form the PDZ 1 domain. Disordered stretches follow at residues 1227-1258 (HISE…SLSQ) and 1273-1362 (TWQE…SPPK). 3 stretches are compositionally biased toward polar residues: residues 1243 to 1258 (SLSS…SLSQ), 1273 to 1288 (TWQE…SVIS), and 1327 to 1359 (TYSS…FSSS). PDZ domains are found at residues 1368 to 1452 (EVEL…LEKG) and 1501 to 1588 (EVKL…LCRP). Over residues 1608 to 1630 (AQVLPNSSKDSSQPSCVEQSTSS) the composition is skewed to polar residues. 2 disordered regions span residues 1608–1665 (AQVL…DLVT) and 1715–1751 (PNKP…SSMD). Residues 1736-1749 (QSYQPQSESASSSS) are compositionally biased toward low complexity. PDZ domains lie at 1788-1868 (LITL…IGRV) and 1882-1965 (PDIT…ATRN). The disordered stretch occupies residues 1971 to 1996 (PSSKRSAVSAPKSTKGNGSYSVGSCS). Residues 1973 to 1996 (SKRSAVSAPKSTKGNGSYSVGSCS) are compositionally biased toward polar residues. The Tyrosine-protein phosphatase domain maps to 2213 to 2467 (PSKELENLQE…IFCYQVILYV (255 aa)). Substrate-binding positions include aspartate 2378, 2408-2414 (CSAGIGR), and glutamine 2452. Catalysis depends on cysteine 2408, which acts as the Phosphocysteine intermediate. The tract at residues 2408-2414 (CSAGIGR) is substrate.

It belongs to the protein-tyrosine phosphatase family. Non-receptor class subfamily. As to quaternary structure, interacts (via the first PDZ domain) with PLEKHA1 and PLEKHA2. Interacts (via the second PDZ domain) with TNFRSF6 (Fas receptor) (via C-terminus). Interacts (via the second PDZ domain) with TRIP6 (via the third LIM domain and C-terminus). Interacts (via the third PDZ domain) with NGFR (via C-terminal SVP motif) and PKN2 (via C-terminus). Interacts (via the second or fourth PDZ domains) with PDLIM4 (via C-terminus only or via combined C-terminus and LIM domain, but not LIM domain only). Found in a complex with PDLIM4 and TRIP6. Interacts with PDLIM4; this interaction results in dephosphorylation of SRC 'Tyr-419' by this protein leading to its inactivation. Interacts with BRD7. Interacts with RAPGEF6. Interacts with ARHGAP29. Interacts with PIK3R2; dephosphorylates PIK3R2. Interacts with FBXL2. Interacts (via the FERM domain) with ENTR1. Found in a complex with ENTR1, PTPN13 and GIT1. Expressed in keratinocytes (at protein level). Present in most tissues with the exception of the liver and skeletal muscle. Most abundant in lung, kidney and fetal brain.

The protein localises to the cytoplasm. It is found in the cytoskeleton. Its subcellular location is the nucleus. The protein resides in the cell projection. It localises to the lamellipodium. It carries out the reaction O-phospho-L-tyrosyl-[protein] + H2O = L-tyrosyl-[protein] + phosphate. Its function is as follows. Tyrosine phosphatase which negatively regulates FAS-induced apoptosis and NGFR-mediated pro-apoptotic signaling. May regulate phosphoinositide 3-kinase (PI3K) signaling through dephosphorylation of PIK3R2. The protein is Tyrosine-protein phosphatase non-receptor type 13 (PTPN13) of Homo sapiens (Human).